The sequence spans 378 residues: MGLDLLSTYAPGIFDSLLTWKGVAGLVVAITLGYLIISRLPGQKSRPKLLDLKTGGISFEKVAAVYDDYDKSYGEGDHGELHVKDKNKVFQLANTFYDFVTDGYEWAWGSSFHFSQRMPGLSHAASQMLHESRMASFLRLKPGMKCLDVGCGVGNPGRTVASCSGAEVTGITINEYQIKRAEYHNKRTGLVGYFKPVVGNFCAMPFKDKTFDAAFAMDSTCHAPKLEDVYSEVFRVLKPGGLFATYEWVSTKDYDPNNSRHVKVMNSIIFGNGLPNIRSWKQAEDAGKNVGFKLVTSFDLATAPPVGKPWYYVPELMVKYGLLTIQKALVRGACNVGLLPNEGWKVCNMVADMVPNLVEGGATNIFTPMHLLIFEKPK.

Residues 17–37 (LLTWKGVAGLVVAITLGYLII) traverse the membrane as a helical segment.

Belongs to the class I-like SAM-binding methyltransferase superfamily. Erg6/SMT family.

It localises to the microsome membrane. The catalysed reaction is squalene + 2 S-adenosyl-L-methionine = 3,22-dimethyl-1,2,23,24-tetradehydro-2,3,22,23-tetrahydrosqualene + 2 S-adenosyl-L-homocysteine + 2 H(+). Its function is as follows. Converts squalene to mono- and dimethyl derivatives, but not to tri- and tetramethylated products. Unable to methylate cycloartenol, zymosterol or lanosterol. Methylates both C-3 and C22 positions, but only C-3 position in monomethylated products. Produces mainly dimethylated squalene. The polypeptide is Squalene methyltransferase 1 (TMT-1) (Botryococcus braunii (Green alga)).